The sequence spans 371 residues: Lombricine kinase (371 aa).

Residues 1–86 (MPKFTARQNF…FDAVINEKHG (86 aa)) enclose the Phosphagen kinase N-terminal domain. In terms of domain architecture, Phosphagen kinase C-terminal spans 113–355 (YVKSARIRTG…GKLIEYEKLL (243 aa)). Residues 116–120 (SARIR), H179, R224, R280, 308–313 (RGTGGE), and D323 each bind ATP.

This sequence belongs to the ATP:guanido phosphotransferase family. Homodimer.

The catalysed reaction is L-lombricine + ATP = N-phospho-L-lombricine + ADP + H(+). In Eisenia fetida (Red wiggler worm), this protein is Lombricine kinase.